Reading from the N-terminus, the 41-residue chain is Photosystem I reaction center subunit VIII (41 aa).

Residues 12–32 (WIMIPVTCWLFPVVVMGLLFI) traverse the membrane as a helical segment.

Belongs to the PsaI family.

It is found in the cellular thylakoid membrane. Functionally, may help in the organization of the PsaL subunit. This is Photosystem I reaction center subunit VIII from Cyanothece sp. (strain PCC 7425 / ATCC 29141).